The sequence spans 254 residues: 4-hydroxy-tetrahydrodipicolinate reductase (254 aa).

Residues 8–13, Asp35, 86–88, and 110–113 each bind NAD(+); these read GCSGKM, CST, and SANM. Residue His143 is the Proton donor/acceptor of the active site. His144 provides a ligand contact to (S)-2,3,4,5-tetrahydrodipicolinate. Lys147 functions as the Proton donor in the catalytic mechanism. Residue 153-154 coordinates (S)-2,3,4,5-tetrahydrodipicolinate; that stretch reads GT.

It belongs to the DapB family.

The protein localises to the cytoplasm. The enzyme catalyses (S)-2,3,4,5-tetrahydrodipicolinate + NAD(+) + H2O = (2S,4S)-4-hydroxy-2,3,4,5-tetrahydrodipicolinate + NADH + H(+). The catalysed reaction is (S)-2,3,4,5-tetrahydrodipicolinate + NADP(+) + H2O = (2S,4S)-4-hydroxy-2,3,4,5-tetrahydrodipicolinate + NADPH + H(+). It participates in amino-acid biosynthesis; L-lysine biosynthesis via DAP pathway; (S)-tetrahydrodipicolinate from L-aspartate: step 4/4. In terms of biological role, catalyzes the conversion of 4-hydroxy-tetrahydrodipicolinate (HTPA) to tetrahydrodipicolinate. This chain is 4-hydroxy-tetrahydrodipicolinate reductase, found in Clostridium perfringens (strain SM101 / Type A).